Reading from the N-terminus, the 206-residue chain is dCTP deaminase, dUMP-forming (206 aa).

DCTP-binding positions include 117–122 (RSSFGR), aspartate 135, 143–145 (TLE), glutamine 163, tyrosine 177, lysine 184, and glutamine 188. The active-site Proton donor/acceptor is the glutamate 145.

The protein belongs to the dCTP deaminase family. Homotrimer.

It catalyses the reaction dCTP + 2 H2O = dUMP + NH4(+) + diphosphate. It participates in pyrimidine metabolism; dUMP biosynthesis; dUMP from dCTP: step 1/1. In terms of biological role, bifunctional enzyme that catalyzes both the deamination of dCTP to dUTP and the hydrolysis of dUTP to dUMP without releasing the toxic dUTP intermediate. The sequence is that of dCTP deaminase, dUMP-forming from Methanococcus maripaludis (strain DSM 14266 / JCM 13030 / NBRC 101832 / S2 / LL).